The following is a 193-amino-acid chain: MTISLAKGQKVDLTKTNPGLSKVVVGLGWDTNKYDGGHDFDLDSSVFLLDAAGKCASPNDFIFYNQLEGGNGSVVHSGDNLTGAGEGDDENVKVNLSAVPANIDKISFVITIHDAEARSQNFGQVSNAFVRIVNEETNEELIRYDLAEDFSIETAIIAGELYRHNGEWKFSAIGSGYQGGLARIATDYGLQVG.

Belongs to the CAPAB/TerDEXZ family.

The polypeptide is General stress protein 16U (yceD) (Bacillus subtilis (strain 168)).